A 273-amino-acid polypeptide reads, in one-letter code: Undecaprenyl-diphosphatase (273 aa).

A run of 7 helical transmembrane segments spans residues 4-24 (FLLLKGLILGIVEGLTEFLPI), 43-63 (KGKVFTIVIQLGAILAVCWEY), 83-103 (FVLNLLIAFLPAAILGLLFIK), 109-129 (LFHPVPVALAFIVGGLLILWA), 184-204 (ATEFSFFLAIPVMFAATFYDL), 218-238 (VFAIGFVASFISALLAVRGLL), and 248-268 (VFAWYRIGFGIIVLITAYSGM).

Belongs to the UppP family.

It is found in the cell inner membrane. The catalysed reaction is di-trans,octa-cis-undecaprenyl diphosphate + H2O = di-trans,octa-cis-undecaprenyl phosphate + phosphate + H(+). In terms of biological role, catalyzes the dephosphorylation of undecaprenyl diphosphate (UPP). Confers resistance to bacitracin. The sequence is that of Undecaprenyl-diphosphatase from Nitrosospira multiformis (strain ATCC 25196 / NCIMB 11849 / C 71).